The primary structure comprises 196 residues: ATP-dependent Clp protease proteolytic subunit (196 aa).

Ser-101 serves as the catalytic Nucleophile. The active site involves His-126.

This sequence belongs to the peptidase S14 family. As to quaternary structure, component of the chloroplastic Clp protease core complex.

It is found in the plastid. The protein localises to the chloroplast stroma. It carries out the reaction Hydrolysis of proteins to small peptides in the presence of ATP and magnesium. alpha-casein is the usual test substrate. In the absence of ATP, only oligopeptides shorter than five residues are hydrolyzed (such as succinyl-Leu-Tyr-|-NHMec, and Leu-Tyr-Leu-|-Tyr-Trp, in which cleavage of the -Tyr-|-Leu- and -Tyr-|-Trp bonds also occurs).. In terms of biological role, cleaves peptides in various proteins in a process that requires ATP hydrolysis. Has a chymotrypsin-like activity. Plays a major role in the degradation of misfolded proteins. The sequence is that of ATP-dependent Clp protease proteolytic subunit from Pinus thunbergii (Japanese black pine).